The sequence spans 354 residues: Protein REDOX 1 (354 aa).

Residue Cys-44 participates in Zn(2+) binding. 45–49 (HSDLH) is an NAD(+) binding site. Zn(2+)-binding residues include His-66, Cys-97, Cys-100, Cys-103, and Cys-111. NAD(+)-binding positions include 185–190 (GLGGLG), Lys-214, 271–273 (VGA), 295–297 (SAV), and Arg-340.

This sequence belongs to the zinc-containing alcohol dehydrogenase family. Zn(2+) is required as a cofactor. Expressed in leaf epidermis.

The enzyme catalyses 3,17-didehydrostemmadenine + NADPH + H2O = (16S)-deshydroxymethyl-stemmadenine + formate + NADP(+). The catalysed reaction is 3,17-didehydrostemmadenine + NADPH + H2O = (16R)-deshydroxymethyl-stemmadenine + formate + NADP(+). It catalyses the reaction 17-dehydrostemmadenine + NADP(+) = 3,17-didehydrostemmadenine + NADPH. The protein operates within alkaloid biosynthesis. Component of iboga and aspidosperma monoterpenoid indole alkaloids (MIAs, e.g. tabersonine and catharanthine) biosynthesis pathway from 19E-geissoschizine. Catalyzes the first oxidation step of the unstable intermediate product resulting from the reaction triggered by the geissoschizine oxidase (GO) in the stemmadenine biosynthesis process from 19E-geissoschizine. The sequence is that of Protein REDOX 1 from Catharanthus roseus (Madagascar periwinkle).